The following is a 426-amino-acid chain: MIKLTFNLIKGLDYKKLDKNYQAKLDEIFSQLKNKKTPSANMLGWIDYVDQDHTKIYKSIDNKITEWDKLKVTDVVVIGIGGSFTGIKAILDVVAYLPSEQKRQIHFIRSLSENSFLKILEEVKDKNWGIVVISKSGTTLEPSVGFKLFREALYKQYGEQAQKRIVAITDPKKGVLHDIAVKNKYEMLPIYSDIGGRFSTITPSGLLVAGLVGADYKQLIEGAKKAKADLFASSELKKNSAYTYAALRHYLYTEMKKDVEIAITYEEQHEYLMLQHRQLFGESEGKSLNSLFPTYSVFTTDLHSMGQLYQDGKKIFFETVFSFEKANKNKLKLKNSEFNNDDQLDYLTKKSVNQLNYVACEATKQAHASAGVPIIEIDVKENSAYGFGYLYFWLCVATSVSALLLGHDPYNQPGVENYKQRMFKLL.

Glu-282 functions as the Proton donor in the catalytic mechanism. Catalysis depends on residues His-303 and Lys-419.

It belongs to the GPI family.

The protein resides in the cytoplasm. The catalysed reaction is alpha-D-glucose 6-phosphate = beta-D-fructose 6-phosphate. The protein operates within carbohydrate biosynthesis; gluconeogenesis. Its pathway is carbohydrate degradation; glycolysis; D-glyceraldehyde 3-phosphate and glycerone phosphate from D-glucose: step 2/4. In terms of biological role, catalyzes the reversible isomerization of glucose-6-phosphate to fructose-6-phosphate. The polypeptide is Glucose-6-phosphate isomerase (Mycoplasmoides gallisepticum (strain R(low / passage 15 / clone 2)) (Mycoplasma gallisepticum)).